The following is a 234-amino-acid chain: Thymidine kinase, cytosolic (234 aa).

Ser13 is subject to Phosphoserine. Residues 26–33 (GPMFSGKS), 58–60 (DTR), and 97–100 (DEGQ) contribute to the ATP site. Glu98 functions as the Proton acceptor in the catalytic mechanism. Phe128 lines the substrate pocket. Positions 153 and 156 each coordinate Zn(2+). Substrate contacts are provided by residues 172 to 176 (VEVIG) and Tyr181. Residues Cys185 and Cys188 each contribute to the Zn(2+) site. The KEN box motif lies at 203–205 (KEN).

It belongs to the thymidine kinase family. Homotetramer. Tetramerization from dimerization is induced by ATP and increases catalytic efficiency due to a high affinity for thymidine. Tetramerization is inhibited by phosphorylation at Ser-13. Interacts (via the KEN box) with FZR1. Post-translationally, phosphorylated on Ser-13 in mitosis. Phosphorylation of Ser-13 by CDK1 during mitosis reduces homotetramerization and catalytic efficiency when DNA replication is complete and intracellular TK1 is still present at a high level. Polyubiquitinated. Postmitosis, ubiquitination leads to proteasomal degradation. The KEN box sequence located at the C-terminal region targets for degradation by the anaphase promoting complex (APC/C) activated and rate-limited by FZR1.

It is found in the cytoplasm. It carries out the reaction thymidine + ATP = dTMP + ADP + H(+). Functionally, cell-cycle-regulated enzyme of importance in nucleotide metabolism. Catalyzes the first enzymatic step in the salvage pathway converting thymidine into thymidine monophosphate. Transcriptional regulation limits expression to the S phase of the cell cycle and transient expression coincides with the oscillation in the intracellular dTTP concentration. In Cricetulus griseus (Chinese hamster), this protein is Thymidine kinase, cytosolic (TK1).